The following is a 376-amino-acid chain: Rhodopsin (376 aa).

Residues 1–52 (MSSWSNQPAMDDYGLPSSNPYGNFTVVDMAPKDILHMIHPHWYQYPPMNPMM) are Extracellular-facing. A glycan (N-linked (GlcNAc...) asparagine) is linked at asparagine 23. Residues 53-77 (YPLLLIFMLFTGILCLAGNFVTIWV) traverse the membrane as a helical segment. The Cytoplasmic segment spans residues 78–89 (FMNTKSLRTPAN). A helical transmembrane segment spans residues 90 to 112 (LLVVNLAMSDFLMMFTMFPPMMV). Over 113 to 126 (TCYYHTWTLGPTFC) the chain is Extracellular. An intrachain disulfide couples cysteine 126 to cysteine 203. A helical membrane pass occupies residues 127–149 (QVYAFLGNLCGCASIWTMVFITF). Residues 150–152 (DRY) carry the 'Ionic lock' involved in activated form stabilization motif. The Cytoplasmic segment spans residues 150–168 (DRYNVIVKGVAGEPLSTKK). Residues 169-189 (ASLWILTIWVLSITWCIAPFF) traverse the membrane as a helical segment. The Extracellular segment spans residues 190–216 (GWNRYVPEGNLTGCGTDYLSEDILSRS). A glycan (N-linked (GlcNAc...) asparagine) is linked at asparagine 199. The helical transmembrane segment at 217–237 (YLYDYSTWVYYLPLLPIYCYV) threads the bilayer. Topologically, residues 238–278 (SIIKAVAAHEKGMRDQAKKMGIKSLRNEEAQKTSAECRLAK) are cytoplasmic. A helical transmembrane segment spans residues 279 to 300 (IAMTTVALWFIAWTPYLLINWV). Residues 301 to 311 (GMFARSYLSPV) lie on the Extracellular side of the membrane. The chain crosses the membrane as a helical span at residues 312 to 333 (YTIWGYVFAKANAVYNPIVYAI). Lysine 321 is subject to N6-(retinylidene)lysine. Topologically, residues 334–376 (SHPKYRAAMEKKLPCLSCKTESDDVSESASTTTSSAEEKAESA) are cytoplasmic. The segment at 353-376 (TESDDVSESASTTTSSAEEKAESA) is disordered.

Belongs to the G-protein coupled receptor 1 family. Opsin subfamily. As to quaternary structure, homodimer. Interacts with GNAQ. In terms of processing, contains one covalently linked retinal chromophore. Detected on rhabdomere membranes on photoreceptor cells in the retina (at protein level).

It is found in the cell projection. The protein localises to the rhabdomere membrane. Functionally, photoreceptor required for image-forming vision at low light intensity. Can use both retinal and 3-dehydroretinal as visual pigment. Light-induced isomerization of 11-cis to all-trans retinal triggers a conformational change that activates signaling via G-proteins. Signaling via GNAQ probably mediates the activation of phospholipase C. This is Rhodopsin (RHO) from Procambarus clarkii (Red swamp crayfish).